A 224-amino-acid polypeptide reads, in one-letter code: Ribonuclease T (224 aa).

Residues 20 to 195 (VVIDVETAGF…YDTQKTAELF (176 aa)) form the Exonuclease domain. Residues Asp-23, Glu-25, His-182, and Asp-187 each coordinate Mg(2+). His-182 (proton donor/acceptor) is an active-site residue.

Belongs to the RNase T family. In terms of assembly, homodimer. Requires Mg(2+) as cofactor.

Its function is as follows. Trims short 3' overhangs of a variety of RNA species, leaving a one or two nucleotide 3' overhang. Responsible for the end-turnover of tRNA: specifically removes the terminal AMP residue from uncharged tRNA (tRNA-C-C-A). Also appears to be involved in tRNA biosynthesis. The chain is Ribonuclease T from Vibrio cholerae serotype O1 (strain ATCC 39315 / El Tor Inaba N16961).